The chain runs to 940 residues: MSDYKSTLNLPETEFPMRGNLANREPEMLKSWNENGLYQQIRESRKDAKPFILHDGPPYANGDIHIGHSVNKILKDIIIKSKTMSGFDAPYIPGWDCHGLPIELKVEQKVGKPGHKVTAAEFRQKCREYAAKQVDGQREDFIRLGVFADWQNPYLTMDFSTEANIVRSLSKVIENGHLHKGVKPVHWCTDCGSALAEAEVEYEDKMSPAIDVAFTAVDKSALLAKFGLADYAHNISMVIWTTTPWTLPANRALAVAANVEYTLVEMVKDGQTQALVLATDLYESCIERFGAESHTVLGTVAGSDLELLRFNHPFYDFDVPVILGDHVTVDSGTGVVHTAPGHGQDDFVVGQKYGLEVANPVGDNGVYKPDTEIFAGLHVFKANKNVVELLEEKGALLSHVQIKHSYPHCWRHKTPIIFRATPQWFISMDQKGLRTQAISEIEQTKWIPDWGQSRIEKMVENRPDWCISRQRTWGVPITLFVHRETEELHPDSVSLMERVAARIEQQGIQAWWDLDASELLGDEADQYRKVTDTLDVWYDSGSTFSTVVAARPEFHGHDIDLYLEGSDQHRGWFMSSLMISTAMNGKAPYKQVLTHGFTVDGQGRKMSKSVGNVISPQHVTNKLGADILRLWVAATDYSGEMTVSDQILNRSADAYRRIRNTARFLLANINGFDPVSDMVAIEDMVALDRWVVRRAAALQQELLEAYDEYNFHLVTQKLMQFCSVELGSFYLDIIKDRQYTAKGDSNARRSCQSALYLISEAMVRWIAPILSFTADEIWKLLPGERGEYVFTETWYEGLKSITLESDLSDEYWDQLLAVRAEVNKVIENARREKQIGGSLEAEVTLFADDALSAVLEKLGDELRFVLLTSKTEVVALAAAPSDAIGTELASLKLSLKKSEAEKCERCWHHREDVGTVTEHPTLCVRCVTNIEGDGEVRQFA.

A 'HIGH' region motif is present at residues 58–68 (PYANGDIHIGH). Glutamate 564 contacts L-isoleucyl-5'-AMP. The 'KMSKS' region motif lies at 605 to 609 (KMSKS). Lysine 608 is an ATP binding site. 4 residues coordinate Zn(2+): cysteine 903, cysteine 906, cysteine 923, and cysteine 926.

It belongs to the class-I aminoacyl-tRNA synthetase family. IleS type 1 subfamily. As to quaternary structure, monomer. It depends on Zn(2+) as a cofactor.

It is found in the cytoplasm. It carries out the reaction tRNA(Ile) + L-isoleucine + ATP = L-isoleucyl-tRNA(Ile) + AMP + diphosphate. In terms of biological role, catalyzes the attachment of isoleucine to tRNA(Ile). As IleRS can inadvertently accommodate and process structurally similar amino acids such as valine, to avoid such errors it has two additional distinct tRNA(Ile)-dependent editing activities. One activity is designated as 'pretransfer' editing and involves the hydrolysis of activated Val-AMP. The other activity is designated 'posttransfer' editing and involves deacylation of mischarged Val-tRNA(Ile). The chain is Isoleucine--tRNA ligase from Shewanella halifaxensis (strain HAW-EB4).